Here is a 221-residue protein sequence, read N- to C-terminus: Small ribosomal subunit protein uS3 (221 aa).

A KH type-2 domain is found at 39–108 (IRKFVKKRSY…NVIINIVEVK (70 aa)).

This sequence belongs to the universal ribosomal protein uS3 family. As to quaternary structure, part of the 30S ribosomal subunit. Forms a tight complex with proteins S10 and S14.

Functionally, binds the lower part of the 30S subunit head. Binds mRNA in the 70S ribosome, positioning it for translation. This Clostridium novyi (strain NT) protein is Small ribosomal subunit protein uS3.